Consider the following 702-residue polypeptide: Neurochondrin (702 aa).

It belongs to the neurochondrin family.

It localises to the cytoplasm. The protein resides in the cytosol. It is found in the cell projection. Its subcellular location is the dendrite. The protein localises to the postsynapse. Functionally, probably involved in signal transduction, in the nervous system. Required for the spatial learning process. May also be involved in neurite outgrowth. The sequence is that of Neurochondrin (NCDN) from Gallus gallus (Chicken).